We begin with the raw amino-acid sequence, 946 residues long: Bifunctional glutamine synthetase adenylyltransferase/adenylyl-removing enzyme (946 aa).

Residues 1 to 440 (MKPLSSPLQQ…VFNELIGDDE (440 aa)) form an adenylyl removase region. The interval 449–946 (SEHWRELWQD…ASWQKWLVAG (498 aa)) is adenylyl transferase.

Belongs to the GlnE family. The cofactor is Mg(2+).

It carries out the reaction [glutamine synthetase]-O(4)-(5'-adenylyl)-L-tyrosine + phosphate = [glutamine synthetase]-L-tyrosine + ADP. The catalysed reaction is [glutamine synthetase]-L-tyrosine + ATP = [glutamine synthetase]-O(4)-(5'-adenylyl)-L-tyrosine + diphosphate. Its function is as follows. Involved in the regulation of glutamine synthetase GlnA, a key enzyme in the process to assimilate ammonia. When cellular nitrogen levels are high, the C-terminal adenylyl transferase (AT) inactivates GlnA by covalent transfer of an adenylyl group from ATP to specific tyrosine residue of GlnA, thus reducing its activity. Conversely, when nitrogen levels are low, the N-terminal adenylyl removase (AR) activates GlnA by removing the adenylyl group by phosphorolysis, increasing its activity. The regulatory region of GlnE binds the signal transduction protein PII (GlnB) which indicates the nitrogen status of the cell. In Citrobacter koseri (strain ATCC BAA-895 / CDC 4225-83 / SGSC4696), this protein is Bifunctional glutamine synthetase adenylyltransferase/adenylyl-removing enzyme.